The primary structure comprises 427 residues: MLALLAAGVAFAVVVLAQDKPLPGSHFVCSAIPPEALFAGCPLPATPMQGVSLSPEEELRAAVLQLRETVVMQKETLGAQREAIRELTSKLARCEGLMAGKAESSKDTMGDLPRDPSRVVEQLSRSLQVLKDRLESLELQLRTNASNTGLPSDFREVLQRRLGELERQLLRKVAELEDEKSLLHNETSAHQQKTENTLNALLQRVTELERGNSAFKSPDAFKVSLPFRTNYLYGKIKKTLPELYSFTICLWLRSSASPGIGTPFSYAVPGQANEIVLIEWGNNPIELLINDKVAQLPLFVSDGKWHHICITWTTRDGLWEAFQDGEKLGTGENLAPWHPIKSGGVLILGQEQDTVGGRFDATQAFVGELSQFNIWDRVLRPQEISNIANCSLNMAGNIIPWVDNNVDVFGGASKWPVETCEERLLDL.

Positions 1-17 (MLALLAAGVAFAVVVLA) are cleaved as a signal peptide. N-linked (GlcNAc...) asparagine glycans are attached at residues Asn144 and Asn185. The Pentraxin (PTX) domain occupies 219–420 (DAFKVSLPFR…GASKWPVETC (202 aa)). The cysteines at positions 249 and 309 are disulfide-linked. Asn273, Glu351, Gln352, Asp353, and Gln363 together coordinate Ca(2+). Asn389 carries N-linked (GlcNAc...) asparagine glycosylation.

In terms of assembly, homooligomer or heterooligomer (probably pentamer) with neuronal pentraxin receptor (NPTXR). It depends on Ca(2+) as a cofactor. As to expression, testis specific.

It localises to the cytoplasmic vesicle. It is found in the secretory vesicle. The protein resides in the acrosome lumen. In terms of biological role, may be involved in binding, concentrating, and sorting soluble glycoproteins or glycolipids that are destined for the acrosome. This is Neuronal pentraxin-2 (NPTX2) from Cavia porcellus (Guinea pig).